The primary structure comprises 178 residues: Conodipine-P2 (178 aa).

Positions 1–24 (MKLLAPVLWAMAALGVTWLVAVDS) are cleaved as a signal peptide. A 4-hydroxyproline mark is found at Pro-38, Pro-42, and Pro-49. Residue His-54 is part of the active site. The propeptide at 98–130 (KREVTSHRATSIAHSRLWKTALDQKSFLNRKAR) is interchain peptide. A Pyrrolidone carboxylic acid modification is found at Gln-131. Pro-137 is modified (4-hydroxyproline).

The protein belongs to the phospholipase A2 family. Group IX subfamily. Heterodimer of an alpha and a beta chain; probably disulfide-linked. Requires Ca(2+) as cofactor. In terms of tissue distribution, expressed by the venom duct.

Its subcellular location is the secreted. The enzyme catalyses a 1,2-diacyl-sn-glycero-3-phosphocholine + H2O = a 1-acyl-sn-glycero-3-phosphocholine + a fatty acid + H(+). Functionally, catalyzes the calcium-dependent hydrolysis of the 2-acyl groups in 3-sn-phosphoglycerides. This is Conodipine-P2 from Conus purpurascens (Purple cone).